The following is a 389-amino-acid chain: E3 ubiquitin-protein ligase E3D (389 aa).

N-acetylalanine is present on Ala2. Positions 129–159 (PLPGDNWGALVDEWCCHPDPFANKPLHPREN) match the BRAT1-like motif motif. Cys144 is a Zn(2+) binding site. The interaction with UBE2C stretch occupies residues 235-257 (LPSERNFPIIPRSQFVQSVLAQC). The segment at 353-389 (LPSTTCLELLLILSKSNATLPPSLRCMNSFQVAFLKM) is HECT-like.

Interacts with UBE2C/UbcH10 (E2 ubiquitin-conjugating enzyme). In vitro, interacts with cyclin-B. In terms of processing, ubiquitinated by UBCH10 (E2 ubiquitin-conjugating enzyme).

The protein localises to the cytoplasm. The catalysed reaction is S-ubiquitinyl-[E2 ubiquitin-conjugating enzyme]-L-cysteine + [acceptor protein]-L-lysine = [E2 ubiquitin-conjugating enzyme]-L-cysteine + N(6)-ubiquitinyl-[acceptor protein]-L-lysine.. Its pathway is protein modification; protein ubiquitination. Functionally, E3 ubiquitin-protein ligase which accepts ubiquitin from specific E2 ubiquitin-conjugating enzymes, and transfers it to substrates, generally promoting their degradation by the proteasome. Independently of its E3 ubiquitin-protein ligase activity, acts as an inhibitor of CPSF3 endonuclease activity by blocking CPSF3 active site. This chain is E3 ubiquitin-protein ligase E3D (UBE3D), found in Bos taurus (Bovine).